A 171-amino-acid chain; its full sequence is Ponticulin-like protein F (171 aa).

An N-terminal signal peptide occupies residues 1–20 (MKFIPALIIFVFTIFALTNS). Gly149 carries GPI-like-anchor amidated glycine lipidation. The propeptide at 150–171 (TSSTIVIPFALILSLLLSVITL) is removed in mature form.

This sequence belongs to the ponticulin family. Post-translationally, the GPI-like-anchor contains a phosphoceramide group, rather than a phosphatidyl group.

The protein localises to the cell membrane. The polypeptide is Ponticulin-like protein F (ponF) (Dictyostelium discoideum (Social amoeba)).